The sequence spans 476 residues: Glycogen synthase (476 aa).

K15 serves as a coordination point for ADP-alpha-D-glucose.

Belongs to the glycosyltransferase 1 family. Bacterial/plant glycogen synthase subfamily.

The enzyme catalyses [(1-&gt;4)-alpha-D-glucosyl](n) + ADP-alpha-D-glucose = [(1-&gt;4)-alpha-D-glucosyl](n+1) + ADP + H(+). It participates in glycan biosynthesis; glycogen biosynthesis. Synthesizes alpha-1,4-glucan chains using ADP-glucose. The sequence is that of Glycogen synthase from Haemophilus influenzae (strain 86-028NP).